The sequence spans 150 residues: Large ribosomal subunit protein bL9 (150 aa).

Belongs to the bacterial ribosomal protein bL9 family.

Functionally, binds to the 23S rRNA. This is Large ribosomal subunit protein bL9 from Lactococcus lactis subsp. cremoris (strain SK11).